Reading from the N-terminus, the 516-residue chain is mRNA export factor ICP27 homolog (516 aa).

Cysteine 231, histidine 336, cysteine 338, and cysteine 343 together coordinate Zn(2+). Residues cysteine 231–cysteine 343 form a CHC2-type zinc finger. Residues tyrosine 399 to serine 409 are compositionally biased toward polar residues. The disordered stretch occupies residues tyrosine 399–serine 423.

This sequence belongs to the HHV-1 ICP27 protein family.

The protein localises to the virion tegument. Its subcellular location is the virion. It is found in the host nucleus. The protein resides in the host cytoplasm. In terms of biological role, immediate early (EI) protein that plays many roles during productive infection including regulation of viral gene expression and nuclear export of intronless viral RNAs. In Homo sapiens (Human), this protein is mRNA export factor ICP27 homolog.